Reading from the N-terminus, the 485-residue chain is NADH-quinone oxidoreductase subunit N (485 aa).

14 helical membrane passes run 8–28 (LIALLPLLIVGLTVVVVMLSI), 35–55 (FLNATLSVIGLNAALVSLWFV), 71–91 (GFAMLYTGLVLLASLATCTFA), 105–125 (FYLLVLIAALGGILLANANHL), 127–147 (SLFLGIELISLPLFGLVGYAF), 159–179 (YTILSAAASSFLLFGMALVYA), 203–223 (LLAGFGLMIVGLGFKLSLVPF), 235–255 (PAPVSTFLATASKIAIFGVVM), 271–291 (VVLAIIAFASIIFGNLMALSQ), 297–317 (LLGYSSISHLGYLLVALIALQ), 326–346 (VGVYLVGYLFSSLGAFGVVSL), 373–393 (AAVMTVMMLSLAGIPMTLGFI), 408–430 (WWLVGAVVVGSAIGLYYYLRVAV), and 455–475 (IVVLISALLVLVLGVWPQPLI).

It belongs to the complex I subunit 2 family. In terms of assembly, NDH-1 is composed of 13 different subunits. Subunits NuoA, H, J, K, L, M, N constitute the membrane sector of the complex.

Its subcellular location is the cell inner membrane. It catalyses the reaction a quinone + NADH + 5 H(+)(in) = a quinol + NAD(+) + 4 H(+)(out). NDH-1 shuttles electrons from NADH, via FMN and iron-sulfur (Fe-S) centers, to quinones in the respiratory chain. The immediate electron acceptor for the enzyme in this species is believed to be ubiquinone. Couples the redox reaction to proton translocation (for every two electrons transferred, four hydrogen ions are translocated across the cytoplasmic membrane), and thus conserves the redox energy in a proton gradient. This chain is NADH-quinone oxidoreductase subunit N, found in Escherichia coli O1:K1 / APEC.